The chain runs to 336 residues: MLSFIARRLGLLIPTFFGVTLLTFALIRLIPGDPVEVMMGERRVDPQMHAEALHRLGLDKPLYQQYLDYVGNLAQGNLGESLTTREGVWHEFLTLFPATLELSLAAMLFAGTFGLLAGVIAALKRGSLFDHGVMTVSLAGYSMPIFWWGLILIMLFSVSLGWTPVSGRLDLLYDIEPKTGFMLIDTLLSDEQGSFLDAVRHLILPAIVLGTIPLAVIARMTRSAMLEVLREDYVRTARAKGLSPARVVFVHALRNALIPVLTVFGLQVGTLLAGAVLTETIFSWPGIGKWLIDAISRRDYPVVQNGILLVATLVILVNFVVDILYGLANPRIRHQR.

6 helical membrane-spanning segments follow: residues 10–30, 102–122, 145–165, 198–218, 257–277, and 307–327; these read GLLI…IRLI, LSLA…VIAA, IFWW…WTPV, AVRH…AVIA, LIPV…GAVL, and ILLV…LYGL. In terms of domain architecture, ABC transmembrane type-1 spans 96–325; it reads FPATLELSLA…LVNFVVDILY (230 aa).

It belongs to the binding-protein-dependent transport system permease family. OppBC subfamily. As to quaternary structure, the complex is composed of two ATP-binding proteins (DppD and DppF), two transmembrane proteins (DppB and DppC) and a solute-binding protein (DppA1-A5). Five orthologous SBPs (DppA1-A5) are present in P.aeruginosa, which increases the substrate specificity of the DppBCDF transporter.

The protein resides in the cell inner membrane. In terms of biological role, part of the ABC transporter DppABCDF involved in the uptake of various di/tripeptides. Is also involved in the uptake of phaseolotoxin, a toxic tripeptide inhibiting the enzyme ornithine carbamoyltransferase. Responsible for the translocation of the substrate across the membrane. The sequence is that of Di/tripeptide transport system permease protein DppB from Pseudomonas aeruginosa (strain UCBPP-PA14).